A 740-amino-acid polypeptide reads, in one-letter code: Ion-translocating oxidoreductase complex subunit C (740 aa).

4Fe-4S ferredoxin-type domains follow at residues 369–397 and 407–436; these read GEPQEEQSCIRCSACADACPADLLPQQLY and KATTHNIADCIECGACAWVCPSNIPLVQYF. [4Fe-4S] cluster-binding residues include Cys-377, Cys-380, Cys-383, Cys-387, Cys-416, Cys-419, Cys-422, and Cys-426. The interval 602 to 684 is disordered; that stretch reads KLEQQQANAE…EPEEQVDPRK (83 aa). 2 stretches are compositionally biased toward low complexity: residues 605-615 and 637-647; these read QQQANAEPEQQ.

It belongs to the 4Fe4S bacterial-type ferredoxin family. RnfC subfamily. In terms of assembly, the complex is composed of six subunits: RsxA, RsxB, RsxC, RsxD, RsxE and RsxG. Requires [4Fe-4S] cluster as cofactor.

It localises to the cell inner membrane. Part of a membrane-bound complex that couples electron transfer with translocation of ions across the membrane. Required to maintain the reduced state of SoxR. The protein is Ion-translocating oxidoreductase complex subunit C of Escherichia coli O7:K1 (strain IAI39 / ExPEC).